A 182-amino-acid chain; its full sequence is Ribosome maturation factor RimM (182 aa).

In terms of domain architecture, PRC barrel spans Glu-102–Phe-182.

It belongs to the RimM family. As to quaternary structure, binds ribosomal protein uS19.

The protein localises to the cytoplasm. An accessory protein needed during the final step in the assembly of 30S ribosomal subunit, possibly for assembly of the head region. Essential for efficient processing of 16S rRNA. May be needed both before and after RbfA during the maturation of 16S rRNA. It has affinity for free ribosomal 30S subunits but not for 70S ribosomes. This chain is Ribosome maturation factor RimM, found in Yersinia pseudotuberculosis serotype IB (strain PB1/+).